A 160-amino-acid chain; its full sequence is Cytochrome b6-f complex subunit 4 (160 aa).

Transmembrane regions (helical) follow at residues 36–56, 95–115, and 131–151; these read LLYIFPVVIFGTIACNVGLAV, LLGVLLMAAVPAGLLTVPFLE, and TVFLIGTVVSIWLGIGAAMPI.

This sequence belongs to the cytochrome b family. PetD subfamily. In terms of assembly, the 4 large subunits of the cytochrome b6-f complex are cytochrome b6, subunit IV (17 kDa polypeptide, petD), cytochrome f and the Rieske protein, while the 4 small subunits are petG, petL, petM and petN. The complex functions as a dimer.

It is found in the plastid. It localises to the chloroplast thylakoid membrane. Component of the cytochrome b6-f complex, which mediates electron transfer between photosystem II (PSII) and photosystem I (PSI), cyclic electron flow around PSI, and state transitions. In Zygnema circumcarinatum (Green alga), this protein is Cytochrome b6-f complex subunit 4.